Consider the following 284-residue polypeptide: L-ribulose-5-phosphate 3-epimerase UlaE (284 aa).

The protein belongs to the L-ribulose-5-phosphate 3-epimerase family.

The catalysed reaction is L-ribulose 5-phosphate = L-xylulose 5-phosphate. It participates in cofactor degradation; L-ascorbate degradation; D-xylulose 5-phosphate from L-ascorbate: step 3/4. In terms of biological role, catalyzes the isomerization of L-xylulose-5-phosphate to L-ribulose-5-phosphate. Is involved in the anaerobic L-ascorbate utilization. In Escherichia coli O8 (strain IAI1), this protein is L-ribulose-5-phosphate 3-epimerase UlaE.